We begin with the raw amino-acid sequence, 967 residues long: Cytosolic carboxypeptidase 2 (967 aa).

One can recognise a Peptidase M14 domain in the interval 330 to 601; that stretch reads YPYTYSDLQR…HFCDTLLDYC (272 aa). His-396, Glu-399, and His-492 together coordinate Zn(2+). The Proton donor/acceptor role is filled by Glu-565. 2 disordered regions span residues 679–706 and 944–967; these read KRRL…LHEA and PGIS…NTMK. The span at 946-967 shows a compositional bias: polar residues; the sequence is ISSSEPHFPNSSEDITVRNTMK.

Belongs to the peptidase M14 family. Requires Zn(2+) as cofactor.

The protein localises to the cytoplasm. The protein resides in the cytosol. Its subcellular location is the cytoskeleton. It is found in the microtubule organizing center. It localises to the centrosome. The protein localises to the centriole. The protein resides in the cilium basal body. It catalyses the reaction (L-glutamyl)(n+1)-gamma-L-glutamyl-L-glutamyl-[protein] + H2O = (L-glutamyl)(n)-gamma-L-glutamyl-L-glutamyl-[protein] + L-glutamate. In terms of biological role, metallocarboxypeptidase that mediates deglutamylation of target proteins. Catalyzes the deglutamylation of polyglutamate side chains generated by post-translational polyglutamylation in proteins such as tubulins. Also removes gene-encoded polyglutamates from the carboxy-terminus of target proteins such as MYLK. Does not show detyrosinase or deglycylase activities from the carboxy-terminus of tubulin. Metallocarboxypeptidase that mediates deglutamylation of tubulin and non-tubulin target proteins. Catalyzes the removal of polyglutamate side chains present on the gamma-carboxyl group of glutamate residues within the C-terminal tail of tubulin protein. Specifically cleaves tubulin long-side-chains, while it is not able to remove the branching point glutamate. Also catalyzes the removal of polyglutamate residues from the carboxy-terminus of non-tubulin proteins. This is Cytosolic carboxypeptidase 2 (agbl2) from Xenopus tropicalis (Western clawed frog).